The following is a 151-amino-acid chain: Ribosome maturation factor RimP (151 aa).

This sequence belongs to the RimP family.

The protein localises to the cytoplasm. Functionally, required for maturation of 30S ribosomal subunits. The polypeptide is Ribosome maturation factor RimP (Vibrio campbellii (strain ATCC BAA-1116)).